Consider the following 401-residue polypeptide: MQKRLTLLGSTGSIGDSTLDVVARHPERFSVYALSAHRNGDKLVEQCLRFEPEVAVVGDADTAARVAAKLREAGCKTEVTYGPQALVDVSESDGCDTVVAAIVGAAGLAPSLAAARAGKRILLANKEALVMSGAIFMDAVRDNGAVLLPVDSEHNAIFQCLPREAALHGGVSKIILTASGGPFRTREPATLVDVTPEEACKHPNWVMGRKISVDSATMMNKGLEVIEAHWLFDLPGERIDVLIHPQSVIHSLVSYADGSVLAQLGNPDMRTPIAHALAFPDRVDSGVAQLDLAQIASLSFEKPDYARFPCLALAMKALAEGGVASAALNAANEIAVEAFLSRQIGFMAIAQVVDAVLNTLPNRSAHALEDVLEADAAARRAAAEFIARLPDGARRTERAVQ.

Thr11, Gly12, Ser13, Ile14, Arg38, Asn39, and Asn125 together coordinate NADPH. A 1-deoxy-D-xylulose 5-phosphate-binding site is contributed by Lys126. Position 127 (Glu127) interacts with NADPH. Asp151 is a Mn(2+) binding site. Positions 152, 153, 179, and 202 each coordinate 1-deoxy-D-xylulose 5-phosphate. Position 153 (Glu153) interacts with Mn(2+). Gly208 lines the NADPH pocket. Residues Ser215, Asn220, Lys221, and Glu224 each contribute to the 1-deoxy-D-xylulose 5-phosphate site. Glu224 contacts Mn(2+).

This sequence belongs to the DXR family. It depends on Mg(2+) as a cofactor. Requires Mn(2+) as cofactor.

It carries out the reaction 2-C-methyl-D-erythritol 4-phosphate + NADP(+) = 1-deoxy-D-xylulose 5-phosphate + NADPH + H(+). The protein operates within isoprenoid biosynthesis; isopentenyl diphosphate biosynthesis via DXP pathway; isopentenyl diphosphate from 1-deoxy-D-xylulose 5-phosphate: step 1/6. Its function is as follows. Catalyzes the NADPH-dependent rearrangement and reduction of 1-deoxy-D-xylulose-5-phosphate (DXP) to 2-C-methyl-D-erythritol 4-phosphate (MEP). The protein is 1-deoxy-D-xylulose 5-phosphate reductoisomerase of Paraburkholderia xenovorans (strain LB400).